Reading from the N-terminus, the 312-residue chain is Acetyl-coenzyme A carboxylase carboxyl transferase subunit alpha (312 aa).

The region spanning 36 to 286 (NLEKEISKTY…ADYVKKSLNE (251 aa)) is the CoA carboxyltransferase C-terminal domain.

The protein belongs to the AccA family. As to quaternary structure, acetyl-CoA carboxylase is a heterohexamer composed of biotin carboxyl carrier protein (AccB), biotin carboxylase (AccC) and two subunits each of ACCase subunit alpha (AccA) and ACCase subunit beta (AccD).

It is found in the cytoplasm. The enzyme catalyses N(6)-carboxybiotinyl-L-lysyl-[protein] + acetyl-CoA = N(6)-biotinyl-L-lysyl-[protein] + malonyl-CoA. It participates in lipid metabolism; malonyl-CoA biosynthesis; malonyl-CoA from acetyl-CoA: step 1/1. Its function is as follows. Component of the acetyl coenzyme A carboxylase (ACC) complex. First, biotin carboxylase catalyzes the carboxylation of biotin on its carrier protein (BCCP) and then the CO(2) group is transferred by the carboxyltransferase to acetyl-CoA to form malonyl-CoA. This is Acetyl-coenzyme A carboxylase carboxyl transferase subunit alpha from Campylobacter jejuni subsp. jejuni serotype O:23/36 (strain 81-176).